The sequence spans 489 residues: NADH-quinone oxidoreductase subunit N (489 aa).

The next 14 membrane-spanning stretches (helical) occupy residues 6–26 (VLFI…AVML), 37–57 (VFYI…PASS), 66–86 (LLIV…GSLA), 105–125 (FYLL…AHHL), 127–147 (AIFI…GYAF), 159–179 (YMVL…LIYA), 204–224 (ITLL…KLSL), 239–259 (PAPV…AVLL), 271–291 (FFYS…NLLA), 299–319 (RLLG…LIAC), 329–349 (VALY…VVSL), 377–397 (SAMT…GFIG), 408–430 (FHLW…YYLR), and 452–472 (ALTT…LLGI).

Belongs to the complex I subunit 2 family. As to quaternary structure, NDH-1 is composed of 14 different subunits. Subunits NuoA, H, J, K, L, M, N constitute the membrane sector of the complex.

It localises to the cell inner membrane. It carries out the reaction a quinone + NADH + 5 H(+)(in) = a quinol + NAD(+) + 4 H(+)(out). In terms of biological role, NDH-1 shuttles electrons from NADH, via FMN and iron-sulfur (Fe-S) centers, to quinones in the respiratory chain. The immediate electron acceptor for the enzyme in this species is believed to be ubiquinone. Couples the redox reaction to proton translocation (for every two electrons transferred, four hydrogen ions are translocated across the cytoplasmic membrane), and thus conserves the redox energy in a proton gradient. The protein is NADH-quinone oxidoreductase subunit N of Tolumonas auensis (strain DSM 9187 / NBRC 110442 / TA 4).